The sequence spans 520 residues: GMP synthase [glutamine-hydrolyzing] (520 aa).

The 193-residue stretch at 13 to 205 (KIIVLDYGSQ…ALNICKAKGD (193 aa)) folds into the Glutamine amidotransferase type-1 domain. The Nucleophile role is filled by Cys90. Active-site residues include His179 and Glu181. A GMPS ATP-PPase domain is found at 206 to 395 (WSMDNFIDMQ…LGMPDHIVWR (190 aa)). 233-239 (SGGVDSS) is a binding site for ATP.

In terms of assembly, homodimer.

The catalysed reaction is XMP + L-glutamine + ATP + H2O = GMP + L-glutamate + AMP + diphosphate + 2 H(+). The protein operates within purine metabolism; GMP biosynthesis; GMP from XMP (L-Gln route): step 1/1. Its function is as follows. Catalyzes the synthesis of GMP from XMP. The chain is GMP synthase [glutamine-hydrolyzing] from Streptococcus pneumoniae serotype 2 (strain D39 / NCTC 7466).